Here is a 193-residue protein sequence, read N- to C-terminus: Pyridoxal 5'-phosphate synthase subunit PdxT (193 aa).

48–50 (GES) lines the L-glutamine pocket. Cys80 (nucleophile) is an active-site residue. Residues Arg109 and 137–138 (IR) contribute to the L-glutamine site. Catalysis depends on charge relay system residues His173 and Glu175.

This sequence belongs to the glutaminase PdxT/SNO family. As to quaternary structure, in the presence of PdxS, forms a dodecamer of heterodimers. Only shows activity in the heterodimer.

It catalyses the reaction aldehydo-D-ribose 5-phosphate + D-glyceraldehyde 3-phosphate + L-glutamine = pyridoxal 5'-phosphate + L-glutamate + phosphate + 3 H2O + H(+). It carries out the reaction L-glutamine + H2O = L-glutamate + NH4(+). Its pathway is cofactor biosynthesis; pyridoxal 5'-phosphate biosynthesis. Catalyzes the hydrolysis of glutamine to glutamate and ammonia as part of the biosynthesis of pyridoxal 5'-phosphate. The resulting ammonia molecule is channeled to the active site of PdxS. The protein is Pyridoxal 5'-phosphate synthase subunit PdxT of Mycobacteroides abscessus (strain ATCC 19977 / DSM 44196 / CCUG 20993 / CIP 104536 / JCM 13569 / NCTC 13031 / TMC 1543 / L948) (Mycobacterium abscessus).